The primary structure comprises 229 residues: Lipoprotein-releasing system ATP-binding protein LolD (229 aa).

Positions 7–229 (LQCINLTKSF…KNGQLFNNKN (223 aa)) constitute an ABC transporter domain. ATP is bound at residue 43 to 50 (GKSGSGKS).

The protein belongs to the ABC transporter superfamily. Lipoprotein translocase (TC 3.A.1.125) family. As to quaternary structure, the complex is composed of two ATP-binding proteins (LolD) and two transmembrane proteins (LolC and LolE).

The protein resides in the cell inner membrane. Part of the ABC transporter complex LolCDE involved in the translocation of mature outer membrane-directed lipoproteins, from the inner membrane to the periplasmic chaperone, LolA. Responsible for the formation of the LolA-lipoprotein complex in an ATP-dependent manner. This Buchnera aphidicola subsp. Schizaphis graminum (strain Sg) protein is Lipoprotein-releasing system ATP-binding protein LolD.